The primary structure comprises 415 residues: Putative FNIP repeat-containing protein L415 (415 aa).

An FNIP repeat occupies 148–185 (FIKKGAIPDSVTHLYFGSDYLSKDIIPKNVVYLRFGDF).

This Acanthamoeba polyphaga mimivirus (APMV) protein is Putative FNIP repeat-containing protein L415.